The sequence spans 674 residues: MPRRRGSSSSSSAAGGSGGGGGFGFSSLRRELHLHNFFRTSSPSASSTSRTPPAALPPRTSAVTIPGSNHKLTSSASSYHPPRELTVSTFSAGSATAADGLGGAHLTPSLSSSVHARRESFLYRASDDLREASSLRPVSRASSIASNEHGHGDDLIVTPFAQLLASLRNVRSNLISITNIQNSDDSRHANRSAKRPPLHNIELPDDVVHCAHDTLEELDWCLDQLETIQTHRSVSEMASSKFRKMLNKELSHFAESSKSGTQVSKFLITTYMDKEEDEPSIEIEVPTEVQGPSTSGPMTLSILKKAQTAAMNKISGVRKLRAPSHDGHVPEYGVNCAREIAVHMQRLDDWGPDVFKIDELSKNHSLTVVTFSLLRQRNLFKTFEIHQSTLVTYLLNLEHHYRNNHYHNFIHAADVAQSMHVLLMSPVLTEVFTDLEVLAAIFAGAVHDVDHPGFTNQYLINSNNELAIMYNDESVLEQHHLAVAFKLLQDSNCDFLANLSRKQRLQFRKIVIDMVLATDMSKHMSLLADLKTMVEAKKVAGNNVIVLDKYNDKIQVLQSMIHLADLSNPTKPIELYQQWNQRIMEEYWRQGDKEKELGLEISPMCDRGNVTIEKSQVGFIDYIVHPLYETWADLVYPDAQNILDQLEENREWYQSRIPEEPDTARTVTEDDEHK.

Residues 1-82 (MPRRRGSSSS…TSSASSYHPP (82 aa)) are disordered. The segment covering 15–24 (GGSGGGGGFG) has biased composition (gly residues). Residues 39–62 (RTSSPSASSTSRTPPAALPPRTSA) show a composition bias toward low complexity. Over residues 66–78 (PGSNHKLTSSASS) the composition is skewed to polar residues. The 333-residue stretch at 328–660 (HVPEYGVNCA…EWYQSRIPEE (333 aa)) folds into the PDEase domain. The active-site Proton donor is the H407. The a divalent metal cation site is built by H411, H447, D448, and D565.

It belongs to the cyclic nucleotide phosphodiesterase family. The cofactor is a divalent metal cation. As to expression, expressed in dorsal D (DD) motor neurons and several other neurons at the L1 stage. Expression in DD neurons decreases gradually beginning in the late L1 stage. Highly expressed in adult ventral D (VD) motor neurons, but diminished in adult DD motor neurons.

It carries out the reaction 3',5'-cyclic AMP + H2O = AMP + H(+). Functionally, hydrolyzes the second messenger 3',5'-cyclic AMP (cAMP), which is a key regulator of many important physiological processes. Antagonizes dorsal D (DD) motor neuron respecification by reducing levels of cAMP. This chain is Probable 3',5'-cyclic-AMP phosphodiesterase pde-4 (pde-4), found in Caenorhabditis elegans.